Here is a 356-residue protein sequence, read N- to C-terminus: Phosphoribosyl pyrophosphate synthase-associated protein 1 (356 aa).

An N-acetylmethionine modification is found at M1. Phosphoserine is present on residues S177 and S215.

Belongs to the ribose-phosphate pyrophosphokinase family. Binds to PRPS1 and PRPS2.

Its function is as follows. Seems to play a negative regulatory role in 5-phosphoribose 1-diphosphate synthesis. The protein is Phosphoribosyl pyrophosphate synthase-associated protein 1 (PRPSAP1) of Bos taurus (Bovine).